The following is a 74-amino-acid chain: UPF0435 protein BcerKBAB4_0386 (74 aa).

Belongs to the UPF0435 family.

In Bacillus mycoides (strain KBAB4) (Bacillus weihenstephanensis), this protein is UPF0435 protein BcerKBAB4_0386.